The following is a 134-amino-acid chain: DNA-binding protein inhibitor ID-2 (134 aa).

A phosphoserine mark is found at serine 14 and serine 25. The region spanning 23 to 75 (SRSKTPVDDPMSLLYNMNDCYSKLKELVPSIPQNKKVSKMEILQHVIDYILDL) is the bHLH domain. The short motif at 106–115 (LNTDISILSL) is the Nuclear export signal element.

As to quaternary structure, interacts with GATA4 and NKX2-5. Interacts with NR0B2. Interacts with CLOCK and BMAL1. Interacts with IFI204. Interacts with NEDD9/HEF1. Interacts with ASB4; this interaction promotes ID2 proteasomal degradation. Post-translationally, ubiquitinated in a ASB4-depedent manner, leading to proteasomal degradation. In terms of processing, phosphorylated in vitro by CDK1, PKA and PKC.

It localises to the cytoplasm. The protein localises to the nucleus. In terms of biological role, transcriptional regulator (lacking a basic DNA binding domain) which negatively regulates the basic helix-loop-helix (bHLH) transcription factors by forming heterodimers and inhibiting their DNA binding and transcriptional activity. Implicated in regulating a variety of cellular processes, including cellular growth, senescence, differentiation, apoptosis, angiogenesis, and neoplastic transformation. Inhibits skeletal muscle and cardiac myocyte differentiation. Regulates the circadian clock by repressing the transcriptional activator activity of the CLOCK-BMAL1 heterodimer. Restricts the CLOCK and BMAL1 localization to the cytoplasm. Plays a role in both the input and output pathways of the circadian clock: in the input component, is involved in modulating the magnitude of photic entrainment and in the output component, contributes to the regulation of a variety of liver clock-controlled genes involved in lipid metabolism. The polypeptide is DNA-binding protein inhibitor ID-2 (ID2) (Sus scrofa (Pig)).